Consider the following 422-residue polypeptide: Protein FAM53B (422 aa).

Phosphoserine occurs at positions 119, 168, 170, 180, 213, and 269. Disordered regions lie at residues 193-225 (GQPC…GRLD) and 243-269 (CPPS…RSRS). Residues 244-269 (PPSANSTPASTPELARRSSGLARSRS) are compositionally biased toward low complexity. Positions 282-285 (KRRR) match the Nuclear localization signal motif. 2 positions are modified to phosphoserine: S335 and S344.

It belongs to the FAM53 family. Interacts with CTNNB1.

Its subcellular location is the nucleus. Functionally, acts as a regulator of Wnt signaling pathway by regulating beta-catenin (CTNNB1) nuclear localization. The sequence is that of Protein FAM53B from Mus musculus (Mouse).